The sequence spans 238 residues: Ribonuclease PH (238 aa).

Phosphate contacts are provided by residues Arg86 and 124–126 (GTR).

This sequence belongs to the RNase PH family. In terms of assembly, homohexameric ring arranged as a trimer of dimers.

The enzyme catalyses tRNA(n+1) + phosphate = tRNA(n) + a ribonucleoside 5'-diphosphate. Functionally, phosphorolytic 3'-5' exoribonuclease that plays an important role in tRNA 3'-end maturation. Removes nucleotide residues following the 3'-CCA terminus of tRNAs; can also add nucleotides to the ends of RNA molecules by using nucleoside diphosphates as substrates, but this may not be physiologically important. Probably plays a role in initiation of 16S rRNA degradation (leading to ribosome degradation) during starvation. The chain is Ribonuclease PH from Photobacterium profundum (strain SS9).